A 303-amino-acid chain; its full sequence is Ribosomal RNA small subunit methyltransferase H (303 aa).

Residues 32-34, aspartate 52, phenylalanine 78, aspartate 99, and glutamine 106 each bind S-adenosyl-L-methionine; that span reads GGH.

Belongs to the methyltransferase superfamily. RsmH family.

It is found in the cytoplasm. The catalysed reaction is cytidine(1402) in 16S rRNA + S-adenosyl-L-methionine = N(4)-methylcytidine(1402) in 16S rRNA + S-adenosyl-L-homocysteine + H(+). Specifically methylates the N4 position of cytidine in position 1402 (C1402) of 16S rRNA. This chain is Ribosomal RNA small subunit methyltransferase H, found in Acinetobacter baylyi (strain ATCC 33305 / BD413 / ADP1).